Consider the following 416-residue polypeptide: Adenylosuccinate synthetase (416 aa).

Residues 13–19 and 41–43 contribute to the GTP site; these read GDEGKGK and GHT. Asp-14 functions as the Proton acceptor in the catalytic mechanism. 2 residues coordinate Mg(2+): Asp-14 and Gly-41. Residues 14 to 17, 39 to 42, Thr-126, Arg-140, Gln-220, Thr-235, and Arg-299 each bind IMP; these read DEGK and NAGH. Residue His-42 is the Proton donor of the active site. Position 295–301 (295–301) interacts with substrate; sequence TTTGRKR. GTP-binding positions include Arg-301, 327–329, and 405–407; these read KLD and STS.

Belongs to the adenylosuccinate synthetase family. Homodimer. It depends on Mg(2+) as a cofactor.

The protein resides in the cytoplasm. It carries out the reaction IMP + L-aspartate + GTP = N(6)-(1,2-dicarboxyethyl)-AMP + GDP + phosphate + 2 H(+). It functions in the pathway purine metabolism; AMP biosynthesis via de novo pathway; AMP from IMP: step 1/2. Functionally, plays an important role in the de novo pathway of purine nucleotide biosynthesis. Catalyzes the first committed step in the biosynthesis of AMP from IMP. The sequence is that of Adenylosuccinate synthetase from Campylobacter hominis (strain ATCC BAA-381 / DSM 21671 / CCUG 45161 / LMG 19568 / NCTC 13146 / CH001A).